The primary structure comprises 483 residues: Probable zinc metalloprotease PTT_08196 (483 aa).

An N-terminal signal peptide occupies residues 1 to 18; it reads MLFRSVILSNALLLPACA. N-linked (GlcNAc...) asparagine glycans are attached at residues Asn96 and Asn121. 3 residues coordinate Zn(2+): His167, Asp187, and Glu220. The N-linked (GlcNAc...) asparagine glycan is linked to Asn235. Zn(2+) is bound at residue Asp247. 5 N-linked (GlcNAc...) asparagine glycosylation sites follow: Asn310, Asn362, Asn401, Asn411, and Asn421. A Fibronectin type-III domain is found at 396–483; sequence PAMPRNVTID…KSPAVYPFPA (88 aa).

This sequence belongs to the peptidase M28 family. M28B subfamily. Zn(2+) serves as cofactor.

It is found in the secreted. The chain is Probable zinc metalloprotease PTT_08196 from Pyrenophora teres f. teres (strain 0-1) (Barley net blotch fungus).